Reading from the N-terminus, the 496-residue chain is Membrane-bound lytic murein transglycosylase F (496 aa).

The signal sequence occupies residues M1 to C31. Residues D32–V271 form a non-LT domain region. An LT domain region spans residues N273–R496. The active site involves E316. The interval H464 to V485 is disordered.

In the N-terminal section; belongs to the bacterial solute-binding protein 3 family. This sequence in the C-terminal section; belongs to the transglycosylase Slt family.

The protein resides in the cell outer membrane. The catalysed reaction is Exolytic cleavage of the (1-&gt;4)-beta-glycosidic linkage between N-acetylmuramic acid (MurNAc) and N-acetylglucosamine (GlcNAc) residues in peptidoglycan, from either the reducing or the non-reducing ends of the peptidoglycan chains, with concomitant formation of a 1,6-anhydrobond in the MurNAc residue.. Its function is as follows. Murein-degrading enzyme that degrades murein glycan strands and insoluble, high-molecular weight murein sacculi, with the concomitant formation of a 1,6-anhydromuramoyl product. Lytic transglycosylases (LTs) play an integral role in the metabolism of the peptidoglycan (PG) sacculus. Their lytic action creates space within the PG sacculus to allow for its expansion as well as for the insertion of various structures such as secretion systems and flagella. The sequence is that of Membrane-bound lytic murein transglycosylase F from Aeromonas salmonicida (strain A449).